Here is a 104-residue protein sequence, read N- to C-terminus: Large ribosomal subunit protein bL21 (104 aa).

It belongs to the bacterial ribosomal protein bL21 family. As to quaternary structure, part of the 50S ribosomal subunit. Contacts protein L20.

This protein binds to 23S rRNA in the presence of protein L20. This Helicobacter pylori (strain G27) protein is Large ribosomal subunit protein bL21.